The following is a 303-amino-acid chain: Succinate--CoA ligase [ADP-forming] subunit alpha (303 aa).

CoA-binding positions include 20-23 (TGSE), Lys46, and 108-110 (ITE). Residue Tyr173 participates in substrate binding. The Tele-phosphohistidine intermediate role is filled by His259.

It belongs to the succinate/malate CoA ligase alpha subunit family. Heterotetramer of two alpha and two beta subunits.

It carries out the reaction succinate + ATP + CoA = succinyl-CoA + ADP + phosphate. It catalyses the reaction GTP + succinate + CoA = succinyl-CoA + GDP + phosphate. The protein operates within carbohydrate metabolism; tricarboxylic acid cycle; succinate from succinyl-CoA (ligase route): step 1/1. Succinyl-CoA synthetase functions in the citric acid cycle (TCA), coupling the hydrolysis of succinyl-CoA to the synthesis of either ATP or GTP and thus represents the only step of substrate-level phosphorylation in the TCA. The alpha subunit of the enzyme binds the substrates coenzyme A and phosphate, while succinate binding and nucleotide specificity is provided by the beta subunit. This is Succinate--CoA ligase [ADP-forming] subunit alpha from Mycobacterium tuberculosis (strain CDC 1551 / Oshkosh).